Consider the following 394-residue polypeptide: MTIADLPLLPLGRGTDLTSERGVECPGDLPPASDPALVERARAAKAALGDRVFVLGHHYQRDEVIQFADVTGDSFKLAREAAARPDAEYIVFCGVHFMAESADILTGPSQQVILPDLAAGCSMADMARLTQVEMAWDALAAAGVADSVVPVTYMNSSADIKAFCGRNGGLVCTSSNAEVALEWAFEQKGGVEGDAKILFLPDQHLGRNTAVLKMGLSVDDCVVWDPFRPGGGLTPEQLRAAKVILWRGHCSVHGKFSPDVVDELRATIPGVQILVHPECTHELVLKADLVGSTEFIIKTIEAAPSGSSWSIGTELNLVKRLSAAHPDKNISFLDKTVCYCSTMNRIDLPHLVWALESLVAGTVVNRIEVDPETETWALLALERMLALPGKSHKD.

His57 and Ser74 together coordinate iminosuccinate. A [4Fe-4S] cluster-binding site is contributed by Cys121. Iminosuccinate-binding positions include Tyr153–Asn155 and Ser174. Cys250 lines the [4Fe-4S] cluster pocket. Iminosuccinate is bound by residues His276 to Glu278 and Thr293. Cys340 lines the [4Fe-4S] cluster pocket.

Belongs to the quinolinate synthase family. Type 3 subfamily. [4Fe-4S] cluster is required as a cofactor.

It localises to the cytoplasm. The enzyme catalyses iminosuccinate + dihydroxyacetone phosphate = quinolinate + phosphate + 2 H2O + H(+). The protein operates within cofactor biosynthesis; NAD(+) biosynthesis; quinolinate from iminoaspartate: step 1/1. Functionally, catalyzes the condensation of iminoaspartate with dihydroxyacetone phosphate to form quinolinate. The polypeptide is Quinolinate synthase (Nocardioides sp. (strain ATCC BAA-499 / JS614)).